The sequence spans 290 residues: Glyceraldehyde-3-phosphate dehydrogenase (290 aa).

The NAD(+) site is built by Asp13 and Arg58. Residues 129–131 (SCT), Thr160, 189–190 (TG), and Arg212 contribute to the D-glyceraldehyde 3-phosphate site. The active-site Nucleophile is Cys130.

This sequence belongs to the glyceraldehyde-3-phosphate dehydrogenase family. In terms of assembly, homotetramer.

The protein resides in the cytoplasm. It catalyses the reaction D-glyceraldehyde 3-phosphate + phosphate + NAD(+) = (2R)-3-phospho-glyceroyl phosphate + NADH + H(+). It participates in carbohydrate degradation; glycolysis; pyruvate from D-glyceraldehyde 3-phosphate: step 1/5. The polypeptide is Glyceraldehyde-3-phosphate dehydrogenase (GPD) (Lactarius deterrimus (False saffron milkcap)).